The sequence spans 381 residues: Transcription termination factor 4, mitochondrial (381 aa).

A mitochondrion-targeting transit peptide spans 1–42; that stretch reads MAAFGRQVLDWHRLIPLTWACMARQTPHLGEQRRTTASLLRK. MTERF repeat units lie at residues 142–172, 177–204, 209–239, 245–270, and 290–318; these read CVVLKKSPQLLKLPIMQMRKRSSYLQKLGLG, KRVLYCCPEIFTMRQQDINDTVRLLKEK, VQQVTKILHSCPSVLREDLGQLEYKFQYAYF, HPDIVKSEYLQYSLTKIKQRHIYLER, and LKDILRVSEAEFLARTACTSVEEFQVFKK. Residues 310–327 are dimerization with NSUN4; it reads VEEFQVFKKLLAREEEES. Positions 322–381 are disordered; sequence REEEESESSTSDDKRASLDEDEDDDDEEDNDEDDNDEDDDDEDDDEAEDNDEDEDDDEEE. The segment covering 340–381 has biased composition (acidic residues); the sequence is DEDEDDDDEEDNDEDDNDEDDDDEDDDEAEDNDEDEDDDEEE.

The protein belongs to the mTERF family. As to quaternary structure, heterodimer with NSUN4; this interaction may be required for NSUN4 recruitment to the mitochondrial large ribosomal subunit. The mature mitochondrial protein exists in 2 forms differing at the level of their N-terminus, one is starting at residue 43 and the other at residue 48.

Its subcellular location is the mitochondrion. Regulator of mitochondrial ribosome biogenesis and translation. Binds to mitochondrial ribosomal RNAs 16S, 12S and 7S and targets NSUN4 RNA methyltransferase to the mitochondrial large ribosomal subunit (39S). The protein is Transcription termination factor 4, mitochondrial (MTERF4) of Homo sapiens (Human).